The following is a 407-amino-acid chain: Peptidase T (407 aa).

His78 lines the Zn(2+) pocket. Residue Asp80 is part of the active site. Zn(2+) is bound at residue Asp139. Glu173 acts as the Proton acceptor in catalysis. Zn(2+) contacts are provided by Glu174, Asp196, and His378.

This sequence belongs to the peptidase M20B family. Zn(2+) serves as cofactor.

The protein localises to the cytoplasm. The enzyme catalyses Release of the N-terminal residue from a tripeptide.. Cleaves the N-terminal amino acid of tripeptides. This chain is Peptidase T, found in Macrococcus caseolyticus (strain JCSC5402) (Macrococcoides caseolyticum).